The sequence spans 363 residues: Protein-glutamate methylesterase/protein-glutamine glutaminase 3 (363 aa).

Residues 8-125 form the Response regulatory domain; sequence KVLCVDDSAL…RDGMLDYAEK (118 aa). Aspartate 59 bears the 4-aspartylphosphate mark. The CheB-type methylesterase domain occupies 164–356; that stretch reads LVSTEKLIII…RRVMARLATM (193 aa). Residues serine 176, histidine 202, and aspartate 298 contribute to the active site.

This sequence belongs to the CheB family. Phosphorylated by CheA. Phosphorylation of the N-terminal regulatory domain activates the methylesterase activity.

Its subcellular location is the cytoplasm. The catalysed reaction is [protein]-L-glutamate 5-O-methyl ester + H2O = L-glutamyl-[protein] + methanol + H(+). It catalyses the reaction L-glutaminyl-[protein] + H2O = L-glutamyl-[protein] + NH4(+). Functionally, involved in chemotaxis. Part of a chemotaxis signal transduction system that modulates chemotaxis in response to various stimuli. Catalyzes the demethylation of specific methylglutamate residues introduced into the chemoreceptors (methyl-accepting chemotaxis proteins or MCP) by CheR. Also mediates the irreversible deamidation of specific glutamine residues to glutamic acid. In Burkholderia lata (strain ATCC 17760 / DSM 23089 / LMG 22485 / NCIMB 9086 / R18194 / 383), this protein is Protein-glutamate methylesterase/protein-glutamine glutaminase 3.